A 521-amino-acid chain; its full sequence is GMP synthase [glutamine-hydrolyzing] (521 aa).

The Glutamine amidotransferase type-1 domain maps to 9-203; the sequence is KILILDFGSQ…ISGICQCEKN (195 aa). Cys86 (nucleophile) is an active-site residue. Residues His177 and Glu179 contribute to the active site. In terms of domain architecture, GMPS ATP-PPase spans 204–396; that stretch reads WTTDNIIAKL…LSIPPHIIYR (193 aa). ATP is bound at residue 231 to 237; that stretch reads SGGVDSL.

As to quaternary structure, homodimer.

It carries out the reaction XMP + L-glutamine + ATP + H2O = GMP + L-glutamate + AMP + diphosphate + 2 H(+). The protein operates within purine metabolism; GMP biosynthesis; GMP from XMP (L-Gln route): step 1/1. Its function is as follows. Catalyzes the synthesis of GMP from XMP. This chain is GMP synthase [glutamine-hydrolyzing], found in Ruthia magnifica subsp. Calyptogena magnifica.